Consider the following 349-residue polypeptide: Isopentenyl-diphosphate delta-isomerase (349 aa).

6–7 provides a ligand contact to substrate; that stretch reads RK. FMN contacts are provided by residues 62-64, S93, and N122; that span reads AMT. Q152 is a substrate binding site. E153 is a binding site for Mg(2+). Residues K184, T214, 258-259, and 280-281 contribute to the FMN site; these read GG and AG.

This sequence belongs to the IPP isomerase type 2 family. As to quaternary structure, homooctamer. Dimer of tetramers. It depends on FMN as a cofactor. Requires NADPH as cofactor. Mg(2+) serves as cofactor.

The protein resides in the cytoplasm. The catalysed reaction is isopentenyl diphosphate = dimethylallyl diphosphate. In terms of biological role, involved in the biosynthesis of isoprenoids. Catalyzes the 1,3-allylic rearrangement of the homoallylic substrate isopentenyl (IPP) to its allylic isomer, dimethylallyl diphosphate (DMAPP). This chain is Isopentenyl-diphosphate delta-isomerase, found in Bacillus cereus (strain B4264).